Here is a 280-residue protein sequence, read N- to C-terminus: Probable endonuclease 4 (280 aa).

9 residues coordinate Zn(2+): His-69, His-109, Glu-145, Asp-179, His-182, His-216, Asp-229, His-231, and Glu-261.

Belongs to the AP endonuclease 2 family. It depends on Zn(2+) as a cofactor.

The catalysed reaction is Endonucleolytic cleavage to 5'-phosphooligonucleotide end-products.. Functionally, endonuclease IV plays a role in DNA repair. It cleaves phosphodiester bonds at apurinic or apyrimidinic (AP) sites, generating a 3'-hydroxyl group and a 5'-terminal sugar phosphate. In Aliarcobacter butzleri (strain RM4018) (Arcobacter butzleri), this protein is Probable endonuclease 4.